A 240-amino-acid chain; its full sequence is Pyridoxine 5'-phosphate synthase (240 aa).

N7 lines the 3-amino-2-oxopropyl phosphate pocket. Residue 9-10 (DH) participates in 1-deoxy-D-xylulose 5-phosphate binding. Position 18 (R18) interacts with 3-amino-2-oxopropyl phosphate. H43 serves as the catalytic Proton acceptor. The 1-deoxy-D-xylulose 5-phosphate site is built by R45 and H50. The active-site Proton acceptor is the E70. T100 lines the 1-deoxy-D-xylulose 5-phosphate pocket. H191 (proton donor) is an active-site residue. 3-amino-2-oxopropyl phosphate is bound by residues G192 and 213 to 214 (GH).

It belongs to the PNP synthase family. As to quaternary structure, homooctamer; tetramer of dimers.

It localises to the cytoplasm. It carries out the reaction 3-amino-2-oxopropyl phosphate + 1-deoxy-D-xylulose 5-phosphate = pyridoxine 5'-phosphate + phosphate + 2 H2O + H(+). Its pathway is cofactor biosynthesis; pyridoxine 5'-phosphate biosynthesis; pyridoxine 5'-phosphate from D-erythrose 4-phosphate: step 5/5. Its function is as follows. Catalyzes the complicated ring closure reaction between the two acyclic compounds 1-deoxy-D-xylulose-5-phosphate (DXP) and 3-amino-2-oxopropyl phosphate (1-amino-acetone-3-phosphate or AAP) to form pyridoxine 5'-phosphate (PNP) and inorganic phosphate. The polypeptide is Pyridoxine 5'-phosphate synthase (Cyanothece sp. (strain PCC 7425 / ATCC 29141)).